Reading from the N-terminus, the 344-residue chain is Trace amine-associated receptor 8b (344 aa).

The Extracellular portion of the chain corresponds to methionine 1–leucine 33. N-linked (GlcNAc...) asparagine glycans are attached at residues asparagine 4 and asparagine 18. 2 disulfides stabilise this stretch: cysteine 21–cysteine 185 and cysteine 104–cysteine 189. A helical transmembrane segment spans residues leucine 34–isoleucine 54. The Cytoplasmic portion of the chain corresponds to serine 55 to asparagine 67. Residues phenylalanine 68–serine 88 traverse the membrane as a helical segment. The Extracellular segment spans residues methionine 89–threonine 102. Residues phenylalanine 103 to valine 127 traverse the membrane as a helical segment. Residues aspartate 128–serine 146 are Cytoplasmic-facing. Residues valine 147–phenylalanine 167 form a helical membrane-spanning segment. The Extracellular segment spans residues tyrosine 168 to aspartate 196. A helical membrane pass occupies residues tryptophan 197 to serine 217. Residues lysine 218–lysine 256 are Cytoplasmic-facing. The helical transmembrane segment at alanine 257–isoleucine 277 threads the bilayer. Topologically, residues aspartate 278 to glutamate 295 are extracellular. The chain crosses the membrane as a helical span at residues isoleucine 296–phenylalanine 319. Topologically, residues arginine 320–glutamate 344 are cytoplasmic.

It belongs to the G-protein coupled receptor 1 family.

It localises to the cell membrane. Olfactory receptor activated by trace amines. Trace amine compounds are enriched in animal body fluids and act on trace amine-associated receptors (TAARs) to elicit both intraspecific and interspecific innate behaviors. Ligand-binding causes a conformation change that triggers signaling via G(s)-class of G alpha proteins (GNAL or GNAS). This Rattus norvegicus (Rat) protein is Trace amine-associated receptor 8b.